Here is a 690-residue protein sequence, read N- to C-terminus: Elongation factor G (690 aa).

A tr-type G domain is found at 8-283 (EDYRNFGIMA…AVVAYLPSPL (276 aa)). GTP is bound by residues 17–24 (AHIDAGKT), 81–85 (DTPGH), and 135–138 (NKMD).

This sequence belongs to the TRAFAC class translation factor GTPase superfamily. Classic translation factor GTPase family. EF-G/EF-2 subfamily.

It is found in the cytoplasm. Its function is as follows. Catalyzes the GTP-dependent ribosomal translocation step during translation elongation. During this step, the ribosome changes from the pre-translocational (PRE) to the post-translocational (POST) state as the newly formed A-site-bound peptidyl-tRNA and P-site-bound deacylated tRNA move to the P and E sites, respectively. Catalyzes the coordinated movement of the two tRNA molecules, the mRNA and conformational changes in the ribosome. This Nitrobacter winogradskyi (strain ATCC 25391 / DSM 10237 / CIP 104748 / NCIMB 11846 / Nb-255) protein is Elongation factor G.